We begin with the raw amino-acid sequence, 351 residues long: UDP-N-acetylglucosamine--N-acetylmuramyl-(pentapeptide) pyrophosphoryl-undecaprenol N-acetylglucosamine transferase (351 aa).

UDP-N-acetyl-alpha-D-glucosamine contacts are provided by residues 13 to 15, Asn125, Arg161, Ser189, Ile241, 260 to 265, and Gln285; these read TGG and ALTVCE.

The protein belongs to the glycosyltransferase 28 family. MurG subfamily.

Its subcellular location is the cell inner membrane. It carries out the reaction di-trans,octa-cis-undecaprenyl diphospho-N-acetyl-alpha-D-muramoyl-L-alanyl-D-glutamyl-meso-2,6-diaminopimeloyl-D-alanyl-D-alanine + UDP-N-acetyl-alpha-D-glucosamine = di-trans,octa-cis-undecaprenyl diphospho-[N-acetyl-alpha-D-glucosaminyl-(1-&gt;4)]-N-acetyl-alpha-D-muramoyl-L-alanyl-D-glutamyl-meso-2,6-diaminopimeloyl-D-alanyl-D-alanine + UDP + H(+). It functions in the pathway cell wall biogenesis; peptidoglycan biosynthesis. Its function is as follows. Cell wall formation. Catalyzes the transfer of a GlcNAc subunit on undecaprenyl-pyrophosphoryl-MurNAc-pentapeptide (lipid intermediate I) to form undecaprenyl-pyrophosphoryl-MurNAc-(pentapeptide)GlcNAc (lipid intermediate II). This is UDP-N-acetylglucosamine--N-acetylmuramyl-(pentapeptide) pyrophosphoryl-undecaprenol N-acetylglucosamine transferase from Haemophilus influenzae (strain PittEE).